Consider the following 404-residue polypeptide: POU domain, class 2, transcription factor 3L (404 aa).

Disordered regions lie at residues 1 to 29 and 44 to 67; these read MNREPDSTVEQQHGSGHLENDAERDTLDF and TGIPHRPCHLSQASMMGGGQMTGE. Basic and acidic residues predominate over residues 16 to 29; that stretch reads GHLENDAERDTLDF. The region spanning 187–235 is the POU-specific domain; the sequence is QGDVGLAMGKLYGNDFSQTTISRFEALNLSFKNMCKLKPLLEKWLNDAE. The homeobox DNA-binding region spans 259-297; that stretch reads KRKKRTSIETNIRLTLEKRFQDNPKPSSEEISMIAEQLV. The interval 346-367 is disordered; sequence MTVTSSCSPGNSSRPSSPTCGL. Over residues 350–363 the composition is skewed to low complexity; it reads SSCSPGNSSRPSSP.

The protein belongs to the POU transcription factor family. Class-2 subfamily.

Its subcellular location is the nucleus. Functionally, transcription factor that binds to the octamer motif (5'-ATTTGCAT-3') and regulates cell type-specific differentiation pathways. The chain is POU domain, class 2, transcription factor 3L (pou2f3.L) from Xenopus laevis (African clawed frog).